We begin with the raw amino-acid sequence, 750 residues long: uncharacterized protein (750 aa).

This is an uncharacterized protein from Escherichia coli O157:H7.